The sequence spans 92 residues: MEENQITIVDEKGNEHLCEIIFTFDAEKFGKKSYVVFSPIGEVDEDGDQIYDAMAYEQNEEEGGTLLPIESEEEWEMVQEMFNTLADEQEAE.

This sequence belongs to the UPF0473 family.

The chain is UPF0473 protein BCE33L4129 from Bacillus cereus (strain ZK / E33L).